The following is a 95-amino-acid chain: Aspartyl/glutamyl-tRNA(Asn/Gln) amidotransferase subunit C (95 aa).

Belongs to the GatC family. In terms of assembly, heterotrimer of A, B and C subunits.

It catalyses the reaction L-glutamyl-tRNA(Gln) + L-glutamine + ATP + H2O = L-glutaminyl-tRNA(Gln) + L-glutamate + ADP + phosphate + H(+). The catalysed reaction is L-aspartyl-tRNA(Asn) + L-glutamine + ATP + H2O = L-asparaginyl-tRNA(Asn) + L-glutamate + ADP + phosphate + 2 H(+). In terms of biological role, allows the formation of correctly charged Asn-tRNA(Asn) or Gln-tRNA(Gln) through the transamidation of misacylated Asp-tRNA(Asn) or Glu-tRNA(Gln) in organisms which lack either or both of asparaginyl-tRNA or glutaminyl-tRNA synthetases. The reaction takes place in the presence of glutamine and ATP through an activated phospho-Asp-tRNA(Asn) or phospho-Glu-tRNA(Gln). The sequence is that of Aspartyl/glutamyl-tRNA(Asn/Gln) amidotransferase subunit C from Chlorobium chlorochromatii (strain CaD3).